Consider the following 142-residue polypeptide: Transcriptional regulator MraZ (142 aa).

SpoVT-AbrB domains are found at residues 5-47 (EYQH…TINE) and 76-119 (ACIV…SREK).

This sequence belongs to the MraZ family. Forms oligomers.

The protein resides in the cytoplasm. It localises to the nucleoid. The sequence is that of Transcriptional regulator MraZ from Clostridium botulinum (strain Alaska E43 / Type E3).